Reading from the N-terminus, the 777-residue chain is Probable aconitate hydratase, mitochondrial (777 aa).

Residues 1–26 (MNSLLRLSHLAGPAHYRALHSSSSIW) constitute a mitochondrion transit peptide. Substrate-binding positions include Gln-96 and 189–191 (DSH). [4Fe-4S] cluster contacts are provided by Cys-382, Cys-445, and Cys-448. Substrate-binding residues include Arg-471 and Arg-476. A disordered region spans residues 534 to 555 (YDPGEDTFQAPSGSGQVDVSPS). Residues 542-555 (QAPSGSGQVDVSPS) are compositionally biased toward polar residues. Substrate contacts are provided by residues Arg-601 and 664–665 (SR).

It belongs to the aconitase/IPM isomerase family. Monomer. Requires [4Fe-4S] cluster as cofactor.

The protein resides in the mitochondrion. It catalyses the reaction citrate = D-threo-isocitrate. It functions in the pathway carbohydrate metabolism; tricarboxylic acid cycle; isocitrate from oxaloacetate: step 2/2. Functionally, catalyzes the isomerization of citrate to isocitrate via cis-aconitate. This Caenorhabditis elegans protein is Probable aconitate hydratase, mitochondrial.